Here is a 216-residue protein sequence, read N- to C-terminus: Sperm microtubule inner protein 8 (216 aa).

As to quaternary structure, microtubule inner protein component of sperm flagellar doublet microtubules. Expressed in testis.

It localises to the cytoplasm. It is found in the cytoskeleton. The protein localises to the flagellum axoneme. In terms of biological role, microtubule inner protein (MIP) part of the dynein-decorated doublet microtubules (DMTs) in flagellum axoneme. May serve to reinforce and thus stabilize the microtubule structure in the sperm flagella. This is Sperm microtubule inner protein 8 (Spmip8) from Mus musculus (Mouse).